The primary structure comprises 755 residues: Lysosome membrane protein 2-B (755 aa).

Topologically, residues 1–6 (MKHIGR) are cytoplasmic. The helical transmembrane segment at 7 to 27 (IVSFPIGLVLIAVGIIIFVVV) threads the bilayer. N-linked (GlcNAc...) asparagine glycans are attached at residues asparagine 28, asparagine 76, asparagine 379, asparagine 465, asparagine 497, asparagine 588, asparagine 607, and asparagine 680. At 28 to 727 (NRTIKDEFKK…AYKVDSFRYA (700 aa)) the chain is on the lumenal side. A helical membrane pass occupies residues 728 to 748 (ITVILIVVGGFLSLISGGLFV). Residues 749–755 (LDKIIDL) are Cytoplasmic-facing. Positions 752–753 (II) match the Di-leucine motif motif.

The protein belongs to the CD36 family. Post-translationally, heavily glycosylated.

It is found in the lysosome membrane. In terms of biological role, may act as a lysosomal receptor. May be involved in macropinocytosis and fluid phase exocytosis. This Dictyostelium discoideum (Social amoeba) protein is Lysosome membrane protein 2-B (lmpB).